A 330-amino-acid polypeptide reads, in one-letter code: G-protein coupled bile acid receptor 1 (330 aa).

The Extracellular portion of the chain corresponds to 1–19 (MTPNSTGEVPGPIPRGALE). A glycan (N-linked (GlcNAc...) asparagine) is linked at Asn-4. Residues 20–40 (LSLALASLIIAANLLLALGIA) form a helical membrane-spanning segment. Residues 41-50 (CDRRLRSPPA) lie on the Cytoplasmic side of the membrane. Residues 51–71 (GCFFLSLLLAGLLTGLALPTL) form a helical membrane-spanning segment. At 72 to 85 (PGLWRQSHRGYWSC) the chain is on the extracellular side. Cys-85 and Cys-155 are joined by a disulfide. The chain crosses the membrane as a helical span at residues 86-106 (LLVYLAPNFSFLSLLANLLLV). The Cytoplasmic segment spans residues 107 to 125 (HGERYVAVLRPLQPPGSIR). The chain crosses the membrane as a helical span at residues 126–146 (LALLLTWTGPLLFASLPALGW). At 147–169 (NHWGPEANCSSQTIFPAPYLYLE) the chain is on the extracellular side. A glycan (N-linked (GlcNAc...) asparagine) is linked at Asn-154. The chain crosses the membrane as a helical span at residues 170 to 190 (VYGLLLPAVGAAALLSAHVLL). The Cytoplasmic portion of the chain corresponds to 191 to 230 (AAHRQLQDIRRLERAVCRDAPSALARALTWRQARAQAGAT). Residues 231–251 (LLFGLCWGPYVATLFLSVLAY) form a helical membrane-spanning segment. Topologically, residues 252–261 (EQRPPLGPGT) are extracellular. Residues 262–282 (LLSLLSLGSASAAAVPVAMGL) traverse the membrane as a helical segment. At 283-330 (GDHRYTAPWRAAARRWLRGLRGRGSQASPGPSTAYHTSSQSSVDVDLN) the chain is on the cytoplasmic side. The disordered stretch occupies residues 304-330 (GRGSQASPGPSTAYHTSSQSSVDVDLN). Residues 307 to 330 (SQASPGPSTAYHTSSQSSVDVDLN) show a composition bias toward polar residues.

This sequence belongs to the G-protein coupled receptor 1 family. In terms of tissue distribution, expressed at high level in spleen. Expressed at lower level in thymus, heart, lung, liver, kidney, ileum, blood and adherent alveolar macrophage cells.

It is found in the cell membrane. In terms of biological role, receptor for bile acid. Bile-acid binding induces its internalization, activation of extracellular signal-regulated kinase and intracellular cAMP production. May be involved in the suppression of macrophage functions by bile acids. Involved in bile acid promoted GLP1R secretion. The protein is G-protein coupled bile acid receptor 1 (GPBAR1) of Oryctolagus cuniculus (Rabbit).